Reading from the N-terminus, the 298-residue chain is Tyrosine recombinase XerC (298 aa).

Positions 1-84 (MNHIQEAFLN…TLRTFYEYWM (84 aa)) constitute a Core-binding (CB) domain. Residues 105–286 (YLPQFFYEEE…SNQQLRKVYL (182 aa)) enclose the Tyr recombinase domain. Active-site residues include Arg-145, Lys-169, His-238, Arg-241, and His-264. Tyr-273 acts as the O-(3'-phospho-DNA)-tyrosine intermediate in catalysis.

This sequence belongs to the 'phage' integrase family. XerC subfamily. In terms of assembly, forms a cyclic heterotetrameric complex composed of two molecules of XerC and two molecules of XerD.

It localises to the cytoplasm. Site-specific tyrosine recombinase, which acts by catalyzing the cutting and rejoining of the recombining DNA molecules. The XerC-XerD complex is essential to convert dimers of the bacterial chromosome into monomers to permit their segregation at cell division. It also contributes to the segregational stability of plasmids. The chain is Tyrosine recombinase XerC from Staphylococcus aureus (strain MRSA252).